The sequence spans 1477 residues: MIALSALLTKYTIGIMSNLSNGNSNNNNQQQQQQQQGQNPQQPAQNEGGAGAEFVAPPPGLGAAVGVAAMQQRNRLLQQQQQQHHHHQNPAAEGSGLERGSCLLRYASQNSLDESSQKHVQRPNGKERGTVGQYSNEQHTARSFDAMNEMRKQKQLCDVILVADDVEIHAHRMVLASCSPYFYAMFTSFEESRQARITLQSVDARALELLIDYVYTATVEVNEDNVQVLLTAANLLQLTDVRDACCDFLQTQLDASNCLGIREFADIHACVELLNYAETYIEQHFNEVIQFDEFLNLSHEQVISLIGNDRISVPNEERVYECVIAWLRYDVPMREQFTSLLMEHVRLPFLSKEYITQRVDKEILLEGNIVCKNLIIEALTYHLLPTETKSARTVPRKPVGMPKILLVIGGQAPKAIRSVEWYDLREEKWYQAAEMPNRRCRSGLSVLGDKVYAVGGFNGSLRVRTVDVYDPATDQWANCSNMEARRSTLGVAVLNGCIYAVGGFDGTTGLSSAEMYDPKTDIWRFIASMSTRRSSVGVGVVHGLLYAVGGYDGFTRQCLSSVERYNPDTDTWVNVAEMSSRRSGAGVGVLNNILYAVGGHDGPMVRRSVEAYDCETNSWRSVADMSYCRRNAGVVAHDGLLYVVGGDDGTSNLASVEVYCPDSDSWRILPALMTIGRSYAGVCMIDKPMUMEEQGALARQAASLAIALLDDENSQAEGTMEGAIGGAIYGNLAPAGGAAAAAAPAAPAQAPQPNHPHYENIYAPIGQPSNNNNNSGSNSNQAAAIANANAPANAEEIQQQQQPAPTEPNANNNPQPPTAAAPAPSQQQQQQQAQPQQPQRILPMNNYRNDLYDRSAAGGVCSAYDVPRAVRSGLGYRRNFRIDMQNGNRCGSGLRCTPLYTNSRSNCQRQRSFDDTESTDGYNLPYAGAGTMRYENIYEQIRDEPLYRTSAANRVPLYTRLDVLGHGIGRIERHLSSSCGNIDHYNLGGHYAVLGHSHFGTVGHIRLNANGSGVAAPGVAGTGTCNVPNCQGYMTAAGSTVPVEYANVKVPVKNSASSFFSCLHGENSQSMTNIYKTSGTAAAMAAHNSPLTPNVSMERASRSASAGAAGSAAAAVEEHSAADSIPSSSNINANRTTGAIPKVKTANKPAKESGGSSTAASPILDKTTSTGSGKSVTLAKKTSTAAARSSSSGDTNGNGTLNRISKSSLQWLLVNKWLPLWIGQGPDCKVIDFNFMFSRDCVSCDTASVASQMSNPYGTPRLSGLPQDMVRFQSSCAGACAAAGAASTIRRDANASARPLHSTLSRLRNGEKRNPNRVAGNYQYEDPSYENVHVQWQNGFEFGRSRDYDPNSTYHQQRPLLQRARSESPTFSNQQRRLQRQGAQAQQQSQQPKPPGSPDPYKNYKLNADNNTFKPKPIAADELEGAVGGAVAEIALPEVDIEVVDPVSLSDNETETTSSQNNLPSTTNSNNLNEHND.

3 disordered regions span residues 19–62, 76–96, and 108–137; these read LSNG…PGLG, LLQQ…EGSG, and SQNS…YSNE. Positions 20-46 are enriched in low complexity; sequence SNGNSNNNNQQQQQQQQGQNPQQPAQN. Phosphoserine is present on residues Ser108 and Ser111. Residues 157–223 enclose the BTB domain; the sequence is CDVILVADDV…VYTATVEVNE (67 aa). Kelch repeat units lie at residues 404–449, 450–496, 498–543, 545–592, 594–639, and 641–687; these read ILLV…VLGD, KVYA…VLNG, IYAV…VVHG, LYAV…VLNN, LYAV…AHDG, and LYVV…MIDK. Position 690 (Sec690) is a non-standard amino acid, selenocysteine. Disordered regions lie at residues 744–841, 1119–1200, 1291–1326, 1359–1416, and 1446–1477; these read PAAP…PQRI, HSAA…GNGT, RDAN…QYED, PLLQ…FKPK, and PVSL…EHND. 2 stretches are compositionally biased toward low complexity: residues 763–813 and 820–839; these read APIG…ANNN and AAPA…QQPQ. The segment covering 1125–1137 has biased composition (polar residues); the sequence is IPSSSNINANRTT. The segment covering 1166-1192 has biased composition (low complexity); it reads KTTSTGSGKSVTLAKKTSTAAARSSSS. 2 stretches are compositionally biased toward low complexity: residues 1374–1391 and 1456–1477; these read QQRR…QSQQ and TTSS…EHND.

In terms of tissue distribution, both proteins are expressed in ovaries, male testis, ovariectomized females, cuticle, salivary gland and imaginal disks. Kelch short protein is the predominant form and is also expressed in fat bodies. On entry into metamorphosis levels of full-length protein increase in testis and imaginal disks.

The protein resides in the cytoplasm. It localises to the cytoskeleton. In terms of biological role, component of ring canals that regulates the flow of cytoplasm between cells. May be involved in the regulation of cytoplasm flow from nurse cells to the oocyte during oogenesis. Binds actin. The chain is Ring canal kelch protein (kel) from Drosophila melanogaster (Fruit fly).